The chain runs to 358 residues: 3-dehydroquinate synthase (358 aa).

NAD(+)-binding positions include 70 to 75 (DGEAHK), 104 to 108 (GVIGD), 128 to 129 (TT), Lys-141, and Lys-150. 3 residues coordinate Zn(2+): Glu-183, His-246, and His-263.

Belongs to the sugar phosphate cyclases superfamily. Dehydroquinate synthase family. Requires NAD(+) as cofactor. It depends on Co(2+) as a cofactor. Zn(2+) is required as a cofactor.

The protein resides in the cytoplasm. The enzyme catalyses 7-phospho-2-dehydro-3-deoxy-D-arabino-heptonate = 3-dehydroquinate + phosphate. Its pathway is metabolic intermediate biosynthesis; chorismate biosynthesis; chorismate from D-erythrose 4-phosphate and phosphoenolpyruvate: step 2/7. Its function is as follows. Catalyzes the conversion of 3-deoxy-D-arabino-heptulosonate 7-phosphate (DAHP) to dehydroquinate (DHQ). This is 3-dehydroquinate synthase from Bordetella bronchiseptica (strain ATCC BAA-588 / NCTC 13252 / RB50) (Alcaligenes bronchisepticus).